The sequence spans 291 residues: 5'-3' exonuclease (291 aa).

The region spanning 176–269 is the 5'-3' exonuclease domain; it reads APYQVVEYKG…DLTGLKPIQK (94 aa).

In terms of biological role, 5'-3' exonuclease acting preferentially on double-stranded DNA. The protein is 5'-3' exonuclease (polA) of Mycoplasma genitalium (strain ATCC 33530 / DSM 19775 / NCTC 10195 / G37) (Mycoplasmoides genitalium).